A 647-amino-acid chain; its full sequence is Phosphomethylpyrimidine synthase (647 aa).

Substrate contacts are provided by residues N235, M264, Y293, H329, 349–351, 390–393, and E429; these read SRG and DGLR. H433 lines the Zn(2+) pocket. Y456 lines the substrate pocket. H497 serves as a coordination point for Zn(2+). [4Fe-4S] cluster is bound by residues C577, C580, and C585. The interval 623–647 is disordered; that stretch reads KSAEFKASGSELYHPAVSHEEVAEG.

The protein belongs to the ThiC family. As to quaternary structure, homodimer. It depends on [4Fe-4S] cluster as a cofactor.

The catalysed reaction is 5-amino-1-(5-phospho-beta-D-ribosyl)imidazole + S-adenosyl-L-methionine = 4-amino-2-methyl-5-(phosphooxymethyl)pyrimidine + CO + 5'-deoxyadenosine + formate + L-methionine + 3 H(+). It functions in the pathway cofactor biosynthesis; thiamine diphosphate biosynthesis. Its function is as follows. Catalyzes the synthesis of the hydroxymethylpyrimidine phosphate (HMP-P) moiety of thiamine from aminoimidazole ribotide (AIR) in a radical S-adenosyl-L-methionine (SAM)-dependent reaction. The chain is Phosphomethylpyrimidine synthase from Vibrio vulnificus (strain CMCP6).